We begin with the raw amino-acid sequence, 448 residues long: Homogentisate 1,2-dioxygenase (448 aa).

The Proton acceptor role is filled by His303. The Fe cation site is built by His346 and Glu352. Residues Tyr361 and His382 each coordinate homogentisate. His382 contacts Fe cation.

This sequence belongs to the homogentisate dioxygenase family. As to quaternary structure, hexamer; dimer of trimers. The cofactor is Fe cation.

The catalysed reaction is homogentisate + O2 = 4-maleylacetoacetate + H(+). Its pathway is amino-acid degradation; L-phenylalanine degradation; acetoacetate and fumarate from L-phenylalanine: step 4/6. Its function is as follows. Involved in the catabolism of homogentisate (2,5-dihydroxyphenylacetate or 2,5-OH-PhAc), a central intermediate in the degradation of phenylalanine and tyrosine. Catalyzes the oxidative ring cleavage of the aromatic ring of homogentisate to yield maleylacetoacetate. This chain is Homogentisate 1,2-dioxygenase, found in Rhodopseudomonas palustris (strain ATCC BAA-98 / CGA009).